The primary structure comprises 258 residues: Hemin import ATP-binding protein HmuV (258 aa).

The ABC transporter domain occupies 1–238 (MLDIDVSNLS…DILERTYRTP (238 aa)). Position 34 to 41 (34 to 41 (GENGAGKS)) interacts with ATP.

Belongs to the ABC transporter superfamily. Heme (hemin) importer (TC 3.A.1.14.5) family. The complex is composed of two ATP-binding proteins (HmuV), two transmembrane proteins (HmuU) and a solute-binding protein (HmuT).

It localises to the cell inner membrane. Its function is as follows. Part of the ABC transporter complex HmuTUV involved in hemin import. Responsible for energy coupling to the transport system. This chain is Hemin import ATP-binding protein HmuV, found in Idiomarina loihiensis (strain ATCC BAA-735 / DSM 15497 / L2-TR).